The chain runs to 344 residues: Type VI secretion system component TssA1 (344 aa).

In terms of assembly, homododecamer. Interacts with TssB1 and TssC1. Interacts with TssK1 and TssF1.

Core component of the H1 type VI (H1-T6SS) secretion system that plays a role in the release of toxins targeting both eukaryotic and prokaryotic species. Forms a dodecameric ring-shaped structure located at one end of the T6SS sheath. May properly attach the pre-assembled sheath onto the baseplate and/or stabilize the sheaths tubular structure. This is Type VI secretion system component TssA1 from Pseudomonas aeruginosa (strain ATCC 15692 / DSM 22644 / CIP 104116 / JCM 14847 / LMG 12228 / 1C / PRS 101 / PAO1).